The chain runs to 437 residues: MITNTKLDPIETASVDELQALQTQRLKWTLKHAYENVPMYRRKFDAAGVHPDDFRELSDLRKFPCTTKQDLRDNYPFDTFAVPMEQVVRIHASSGTTGKPTVVGYTQNDIDNWANIVARSLRAAGGSPKDKIHVAYGYGLFTGGLGAHYGAERLGATVIPMSGGQTEKQAQLIRDFQPDMIMVTPSYCLNLIEELERQLGGDASGCSLRVGVFGAEPWTQAMRKEIERRLGITALDIYGLSEVMGPGVAMECLETTDGPTIWEDHFYPEIVNPHDGTPLADGEHGELLFTTLTKEALPVIRYRTRDLTRLLPGTARTMRRMDRISGRSDDMLIIRGVNVFPSQLEEEIVKFEHLSPHYQLEVNRRGHLDSLSVKVELKESSLTLTHEQRCQVCHQLRHRIKSMVGISTDVMIVNCGSIPRSEGKACRVFDLRNIVGA.

It belongs to the phenylacetyl-CoA ligase family. As to quaternary structure, monomer.

The catalysed reaction is 2-phenylacetate + ATP + CoA = phenylacetyl-CoA + AMP + diphosphate. It functions in the pathway aromatic compound metabolism; phenylacetate degradation. Functionally, catalyzes the activation of phenylacetic acid (PA) to phenylacetyl-CoA (PA-CoA). In Escherichia coli (strain K12), this protein is Phenylacetate-coenzyme A ligase (paaK).